We begin with the raw amino-acid sequence, 167 residues long: Effector CFEM8 (167 aa).

The first 17 residues, 1–17 (MQFSIVVMAALASLASA), serve as a signal peptide directing secretion. Residues 18–112 (QSMDGIPTCA…TPAAAAPYPT (95 aa)) enclose the CFEM domain. Cystine bridges form between C26/C68, C30/C63, C40/C47, and C49/C85. Residue D44 participates in heme binding. N117 and N135 each carry an N-linked (GlcNAc...) asparagine glycan. A lipid anchor (GPI-anchor amidated glycine) is attached at G143. A propeptide spans 144–167 (SAPQNVAGGLAGIFGLVVAAAFAL) (removed in mature form).

Belongs to the RBT5 family.

It localises to the cell membrane. Its subcellular location is the secreted. The protein localises to the host nucleus. The protein resides in the host cell membrane. Its function is as follows. Appears to function during host infection, and may play a role in suppressing the host immune response. This is Effector CFEM8 from Marssonina brunnea f. sp. multigermtubi (strain MB_m1) (Marssonina leaf spot fungus).